Reading from the N-terminus, the 286-residue chain is Hypersensitive-induced response protein 1 (286 aa).

The N-myristoyl glycine moiety is linked to residue glycine 2. Positions 114–190 form a coiled coil; sequence LDDVFEQKND…EKILQIKRAE (77 aa).

Self-interacts and forms heteromers. Interacts with NB-LRR class of R proteins before R proteins (e.g. RPS2 or RPM1) are activated by the effectors. Interacts with LRR1.

It is found in the cell membrane. In terms of biological role, positive regulator of hypersensitive response (HR)-like cell death. May be involved in potassium ion channel regulation. This is Hypersensitive-induced response protein 1 from Arabidopsis thaliana (Mouse-ear cress).